Here is a 514-residue protein sequence, read N- to C-terminus: Putative transposase y4uI (514 aa).

Positions 11 to 93 (VREILKLRLD…PDWSAVAREL (83 aa)) constitute an HTH IS408-type domain. One can recognise an Integrase catalytic domain in the interval 128–317 (HGRLPLVMRQ…TRRALFDELD (190 aa)).

Belongs to the transposase IS21/IS408/IS1162 family.

The polypeptide is Putative transposase y4uI (Sinorhizobium fredii (strain NBRC 101917 / NGR234)).